The primary structure comprises 226 residues: ATP synthase subunit a (226 aa).

Helical transmembrane passes span 20–40 (LNWL…WLLP), 74–94 (FISL…PYIF), 100–120 (LTLT…YGWI), 158–180 (LAVR…GNTG), and 197–217 (IALL…FAVL).

It belongs to the ATPase A chain family. In terms of assembly, F-type ATPases have 2 components, CF(1) - the catalytic core - and CF(0) - the membrane proton channel. CF(1) has five subunits: alpha(3), beta(3), gamma(1), delta(1), epsilon(1). CF(0) has three main subunits: a, b and c.

The protein localises to the mitochondrion inner membrane. Mitochondrial membrane ATP synthase (F(1)F(0) ATP synthase or Complex V) produces ATP from ADP in the presence of a proton gradient across the membrane which is generated by electron transport complexes of the respiratory chain. F-type ATPases consist of two structural domains, F(1) - containing the extramembraneous catalytic core and F(0) - containing the membrane proton channel, linked together by a central stalk and a peripheral stalk. During catalysis, ATP synthesis in the catalytic domain of F(1) is coupled via a rotary mechanism of the central stalk subunits to proton translocation. Key component of the proton channel; it may play a direct role in the translocation of protons across the membrane. The chain is ATP synthase subunit a (ATP6) from Anopheles quadrimaculatus (Common malaria mosquito).